The following is a 509-amino-acid chain: Photosystem II CP47 reaction center protein (509 aa).

6 helical membrane passes run 21-36, 101-115, 140-156, 203-218, 237-252, and 457-472; these read AVHL…WAGS, IGLS…IWHW, GIHL…FGAF, IAAG…FHLS, VLSS…AFIV, and SFAL…HGGR.

It belongs to the PsbB/PsbC family. PsbB subfamily. In terms of assembly, PSII is composed of 1 copy each of membrane proteins PsbA, PsbB, PsbC, PsbD, PsbE, PsbF, PsbH, PsbI, PsbJ, PsbK, PsbL, PsbM, PsbT, PsbX, PsbY, PsbZ, Psb30/Ycf12, at least 3 peripheral proteins of the oxygen-evolving complex and a large number of cofactors. It forms dimeric complexes. Binds multiple chlorophylls. PSII binds additional chlorophylls, carotenoids and specific lipids. serves as cofactor.

It localises to the plastid. Its subcellular location is the cyanelle thylakoid membrane. Functionally, one of the components of the core complex of photosystem II (PSII). It binds chlorophyll and helps catalyze the primary light-induced photochemical processes of PSII. PSII is a light-driven water:plastoquinone oxidoreductase, using light energy to abstract electrons from H(2)O, generating O(2) and a proton gradient subsequently used for ATP formation. This is Photosystem II CP47 reaction center protein from Cyanophora paradoxa.